Here is a 374-residue protein sequence, read N- to C-terminus: Calcium/calmodulin-dependent protein kinase type 1 (374 aa).

The region spanning 20 to 276 (YDFRDVLGTG…CEQALQHPWI (257 aa)) is the Protein kinase domain. Residues 26-34 (LGTGAFSEV) and K49 each bind ATP. K59 is covalently cross-linked (Glycyl lysine isopeptide (Lys-Gly) (interchain with G-Cter in ubiquitin)). Catalysis depends on D141, which acts as the Proton acceptor. Phosphothreonine; by CaMKK1 and CaMKK2 is present on T177. Positions 263–264 (KR) match the Involved in nuclear import motif. The tract at residues 276–316 (IAGDTALDKNIHQSVSEQIKKNFAKSKWKQAFNATAVVRHM) is autoinhibitory domain. Residues 296–317 (KNFAKSKWKQAFNATAVVRHMR) form a calmodulin-binding region. The Nuclear export signal motif lies at 315-321 (HMRKLQL).

Belongs to the protein kinase superfamily. CAMK Ser/Thr protein kinase family. CaMK subfamily. In terms of assembly, monomer. Interacts with XPO1. Phosphorylated by CaMKK1 and CaMKK2 on Thr-177. In terms of processing, polybiquitinated by the E3 ubiquitin-protein ligase complex SCF(FBXL12), leading to proteasomal degradation. In terms of tissue distribution, widely expressed.

The protein resides in the cytoplasm. Its subcellular location is the nucleus. It carries out the reaction L-seryl-[protein] + ATP = O-phospho-L-seryl-[protein] + ADP + H(+). The catalysed reaction is L-threonyl-[protein] + ATP = O-phospho-L-threonyl-[protein] + ADP + H(+). Activated by Ca(2+)/calmodulin. Binding of calmodulin results in conformational change that relieves intrasteric autoinhibition and allows phosphorylation of Thr-177 within the activation loop by CaMKK1 or CaMKK2. Phosphorylation of Thr-177 results in several fold increase in total activity. Unlike CaMK4, is unable to exhibit autonomous activity after Ca(2+)/calmodulin activation. Calcium/calmodulin-dependent protein kinase that operates in the calcium-triggered CaMKK-CaMK1 signaling cascade and, upon calcium influx, regulates transcription activators activity, cell cycle, hormone production, cell differentiation, actin filament organization and neurite outgrowth. Recognizes the substrate consensus sequence [MVLIF]-x-R-x(2)-[ST]-x(3)-[MVLIF]. Regulates axonal extension and growth cone motility in hippocampal and cerebellar nerve cells. Upon NMDA receptor-mediated Ca(2+) elevation, promotes dendritic growth in hippocampal neurons and is essential in synapses for full long-term potentiation (LTP) and ERK2-dependent translational activation. Downstream of NMDA receptors, promotes the formation of spines and synapses in hippocampal neurons by phosphorylating ARHGEF7/BETAPIX on 'Ser-516', which results in the enhancement of ARHGEF7 activity and activation of RAC1. Promotes neuronal differentiation and neurite outgrowth by activation and phosphorylation of MARK2 on 'Ser-91', 'Ser-92', 'Ser-93' and 'Ser-294'. Promotes nuclear export of HDAC5 and binding to 14-3-3 by phosphorylation of 'Ser-259' and 'Ser-498' in the regulation of muscle cell differentiation. Regulates NUMB-mediated endocytosis by phosphorylation of NUMB on 'Ser-275' and 'Ser-294'. Involved in the regulation of basal and estrogen-stimulated migration of medulloblastoma cells through ARHGEF7/BETAPIX phosphorylation. Is required for proper activation of cyclin-D1/CDK4 complex during G1 progression in diploid fibroblasts. Plays a role in K(+) and ANG2-mediated regulation of the aldosterone synthase (CYP11B2) to produce aldosterone in the adrenal cortex. Phosphorylates EIF4G3/eIF4GII. In vitro phosphorylates CREB1, ATF1, CFTR, MYL9 and SYN1/synapsin I. The sequence is that of Calcium/calmodulin-dependent protein kinase type 1 (Camk1) from Rattus norvegicus (Rat).